The primary structure comprises 502 residues: Phenylacetaldehyde dehydrogenase (502 aa).

251-256 provides a ligand contact to NAD(+); that stretch reads GSTEVG. Active-site residues include glutamate 273 and cysteine 307.

Belongs to the aldehyde dehydrogenase family.

The enzyme catalyses 2-phenylacetaldehyde + NAD(+) + H2O = 2-phenylacetate + NADH + 2 H(+). It participates in aromatic compound metabolism. Functionally, phenylacetaldehyde dehydrogenase that catalyzes the last step in the aerobic styrene degradation pathway by mediating oxidation of phenylacetaldehyde to phenylacetic acid. The polypeptide is Phenylacetaldehyde dehydrogenase (styD) (Pseudomonas fluorescens).